A 228-amino-acid polypeptide reads, in one-letter code: Transcription termination/antitermination protein NusG (228 aa).

This sequence belongs to the NusG family.

In terms of biological role, participates in transcription elongation, termination and antitermination. This Mycobacterium leprae (strain TN) protein is Transcription termination/antitermination protein NusG.